A 1462-amino-acid chain; its full sequence is Tyrosine-protein phosphatase 69D (1462 aa).

Residues 1–28 (MALLYRRMSMLLNIILAYIFLCAICVQG) form the signal peptide. 2 consecutive Ig-like C2-type domains span residues 29-125 (SVKQ…TEFQ) and 131-230 (PSKV…KEIT). Residues 29-805 (SVKQEWAEIG…MDYYLSIGVK (777 aa)) lie on the Extracellular side of the membrane. Asn40, Asn58, Asn64, Asn85, Asn109, Asn119, Asn162, Asn191, Asn196, Asn209, Asn255, Asn288, Asn302, Asn429, Asn442, Asn451, Asn516, Asn613, Asn701, and Asn755 each carry an N-linked (GlcNAc...) asparagine glycan. Cysteines 45 and 112 form a disulfide. Cys154 and Cys214 are disulfide-bonded. 3 Fibronectin type-III domains span residues 237-332 (PQVS…TLSY), 334-435 (PIFI…TMDG), and 439-547 (KPTN…TPDA). The helical transmembrane segment at 806-823 (AGAVLLGVILVFIVLWVF) threads the bilayer. At 824 to 1462 (HHKKTKNELQ…LHHIAESTLD (639 aa)) the chain is on the cytoplasmic side. 2 Tyrosine-protein phosphatase domains span residues 893 to 1156 (FLRE…LLDT) and 1187 to 1450 (LEVE…IINY). Catalysis depends on phosphocysteine intermediate residues Cys1097 and Cys1391.

Belongs to the protein-tyrosine phosphatase family. Receptor class subfamily.

The protein resides in the membrane. The enzyme catalyses O-phospho-L-tyrosyl-[protein] + H2O = L-tyrosyl-[protein] + phosphate. Possible cell adhesion receptor. The chain is Tyrosine-protein phosphatase 69D (Ptp69D) from Drosophila melanogaster (Fruit fly).